A 141-amino-acid chain; its full sequence is Nucleoside triphosphatase NudI (141 aa).

The Nudix hydrolase domain occupies 1 to 141; the sequence is MRQRTIVCPL…RHTLALKGLL (141 aa). The short motif at 38–59 is the Nudix box element; it reads GGVEPGERIEEALRREVREELG.

This sequence belongs to the Nudix hydrolase family. NudI subfamily. As to quaternary structure, monomer. It depends on Mg(2+) as a cofactor.

It carries out the reaction a ribonucleoside 5'-triphosphate + H2O = a ribonucleoside 5'-phosphate + diphosphate + H(+). The enzyme catalyses a 2'-deoxyribonucleoside 5'-triphosphate + H2O = a 2'-deoxyribonucleoside 5'-phosphate + diphosphate + H(+). It catalyses the reaction dUTP + H2O = dUMP + diphosphate + H(+). The catalysed reaction is dTTP + H2O = dTMP + diphosphate + H(+). It carries out the reaction dCTP + H2O = dCMP + diphosphate + H(+). Catalyzes the hydrolysis of nucleoside triphosphates, with a preference for pyrimidine deoxynucleoside triphosphates (dUTP, dTTP and dCTP). The sequence is that of Nucleoside triphosphatase NudI from Salmonella schwarzengrund (strain CVM19633).